A 175-amino-acid chain; its full sequence is DELTA-stichotoxin-Hcr4a (175 aa).

Residues A1 to A10 form a plays an important role in the hemolytic activity region. The segment at G9–S28 is N-terminal region. S52, V85, S103, P105, Y131, Y135, and Y136 together coordinate phosphocholine. The interval S103–K118 is trp-rich region, which is important for the binding to lipid membrane.

It belongs to the actinoporin family. Sea anemone subfamily. In terms of assembly, octamer or nonamer in membranes. Monomer in the soluble state.

It localises to the secreted. It is found in the nematocyst. Its subcellular location is the target cell membrane. In terms of biological role, pore-forming protein that forms cations-selective hydrophilic pores of around 1 nm and causes cardiac stimulation and cytolysis. Pore formation is a multi-step process that involves specific recognition of membrane sphingomyelin (but neither cholesterol nor phosphatidylcholine) using aromatic rich region and adjacent phosphocholine (POC) binding site, firm binding to the membrane (mainly driven by hydrophobic interactions) accompanied by the transfer of the N-terminal region to the lipid-water interface and finally pore formation after oligomerization of monomers. In Radianthus crispa (Leathery sea anemone), this protein is DELTA-stichotoxin-Hcr4a.